A 178-amino-acid polypeptide reads, in one-letter code: tRNA (cytidine(56)-2'-O)-methyltransferase (178 aa).

Residues leucine 84, 109–113 (GAEKV), and 127–134 (IGNQPHSE) each bind S-adenosyl-L-methionine.

The protein belongs to the aTrm56 family. In terms of assembly, homodimer.

The protein resides in the cytoplasm. The catalysed reaction is cytidine(56) in tRNA + S-adenosyl-L-methionine = 2'-O-methylcytidine(56) in tRNA + S-adenosyl-L-homocysteine + H(+). In terms of biological role, specifically catalyzes the AdoMet-dependent 2'-O-ribose methylation of cytidine at position 56 in tRNAs. This Methanococcoides burtonii (strain DSM 6242 / NBRC 107633 / OCM 468 / ACE-M) protein is tRNA (cytidine(56)-2'-O)-methyltransferase.